Here is a 453-residue protein sequence, read N- to C-terminus: Choline kinase alpha (453 aa).

A disordered region spans residues 22–81; sequence CGGSAAPTPGVGQQRDAAGELESKQLGGRSQPLALPPPPPPPLPLPPPPSPPLADEQPEP. The segment covering 55 to 73 has biased composition (pro residues); sequence ALPPPPPPPLPLPPPPSPP. Position 71 is a phosphoserine (S71). ATP-binding positions include 113-119, R142, and 203-209; these read RGGLSNM and QFIPSRR. Residue 115 to 117 coordinates phosphocholine; it reads GLS. K243 is modified (N6-acetyllysine). Phosphoserine is present on S275. Positions 304 and 326 each coordinate ATP.

The protein belongs to the choline/ethanolamine kinase family. Heterodimer with CHKB. Homodimer. As to quaternary structure, monomer; acetylation by KAT5 promotes dissociation of the homodimer and monomerization. Post-translationally, phosphorylated at Ser-275 by AMPK in response to glucose deprivation, leading to localization to lipid droplets. In terms of processing, acetylated by KAT5 at Lys-243 following phosphorylation by AMPK, leading to monomerization and conversion into a tyrosine-protein kinase. In terms of tissue distribution, testis, brain, lung, kidney and liver.

The protein resides in the cytoplasm. It localises to the cytosol. The protein localises to the lipid droplet. The enzyme catalyses choline + ATP = phosphocholine + ADP + H(+). It carries out the reaction ethanolamine + ATP = phosphoethanolamine + ADP + H(+). It catalyses the reaction L-tyrosyl-[protein] + ATP = O-phospho-L-tyrosyl-[protein] + ADP + H(+). The protein operates within phospholipid metabolism; phosphatidylcholine biosynthesis; phosphocholine from choline: step 1/1. It participates in phospholipid metabolism; phosphatidylethanolamine biosynthesis; phosphatidylethanolamine from ethanolamine: step 1/3. Its function is as follows. Plays a key role in phospholipid biosynthesis by catalyzing the phosphorylation of free choline to phosphocholine, the first step in phosphatidylcholine biosynthesis. Also phosphorylates ethanolamine, thereby contributing to phosphatidylethanolamine biosynthesis. Has higher activity with choline. This isoform plays a key role in lipolysis of lipid droplets following glucose deprivation. In response to glucose deprivation, phosphorylated by AMPK, promoting localization to lipid droplets. Phosphorylation is followed by acetylation by KAT5, leading to dissociation of the homodimer into a monomer. Monomeric CHKA isoform 1 is converted into a tyrosine-protein kinase, which phosphorylates lipid droplet structural proteins PLIN2 and PLIN3, leading to lipolysis of lipid droplets. The protein is Choline kinase alpha (Chka) of Rattus norvegicus (Rat).